The following is a 317-amino-acid chain: Melanocyte-stimulating hormone receptor (317 aa).

The Extracellular portion of the chain corresponds to 1-37; that stretch reads MPVQGSQRRLLGSLNSTPTATPHLGLAANQTGARCLE. Asn29 carries an N-linked (GlcNAc...) asparagine glycan. Residues 38-63 form a helical membrane-spanning segment; sequence VSIPDGLFLSLGLVSLVENVLVVTAI. At 64-72 the chain is on the cytoplasmic side; it reads AKNRNLHSP. A helical transmembrane segment spans residues 73 to 93; that stretch reads MYCFICCLALSDLLVSGSNML. Residues 94 to 118 are Extracellular-facing; the sequence is ETAVILLLEAGALAARAAVVQQLDN. Residues 119–140 traverse the membrane as a helical segment; the sequence is VIDVITCSSMLASLCFLGAIAV. Topologically, residues 141-163 are cytoplasmic; sequence DRYISIFYALRYHSIVTLPRARR. A helical membrane pass occupies residues 164–183; the sequence is AVAAIWVASVLFSMLFIAYY. Over 184 to 191 the chain is Extracellular; that stretch reads DHAAVLLC. Residues 192 to 211 form a helical membrane-spanning segment; the sequence is LVVFFLAMLVLMAVLYIHML. At 212-240 the chain is on the cytoplasmic side; sequence ARARQHAQGIARLHKRQCPAHQGFGLKGA. A helical transmembrane segment spans residues 241 to 266; it reads ATLTILLGIFFLCWGPFFLHLTLIVL. Over 267-279 the chain is Extracellular; sequence CPQHPTCSCIFKN. The chain crosses the membrane as a helical span at residues 280 to 300; it reads FNLFLALIICNAIIDPLIYAF. Residues 301–317 lie on the Cytoplasmic side of the membrane; the sequence is RSQELRRTLKEVLLCSW. Cys315 is lipidated: S-palmitoyl cysteine.

It belongs to the G-protein coupled receptor 1 family. In terms of assembly, interacts with MGRN1, but does not undergo MGRN1-mediated ubiquitination; this interaction competes with GNAS-binding and thus inhibits agonist-induced cAMP production. Interacts with OPN3; the interaction results in a decrease in MC1R-mediated cAMP signaling and ultimately a decrease in melanin production in melanocytes.

The protein resides in the cell membrane. Its function is as follows. Receptor for MSH (alpha, beta and gamma) and ACTH. The activity of this receptor is mediated by G proteins which activate adenylate cyclase. Mediates melanogenesis, the production of eumelanin (black/brown) and phaeomelanin (red/yellow), via regulation of cAMP signaling in melanocytes. The protein is Melanocyte-stimulating hormone receptor (MC1R) of Cercopithecus mitis (Blue monkey).